The sequence spans 309 residues: Methionyl-tRNA formyltransferase (309 aa).

Residue 107 to 110 (SLLP) participates in (6S)-5,6,7,8-tetrahydrofolate binding.

It belongs to the Fmt family.

It carries out the reaction L-methionyl-tRNA(fMet) + (6R)-10-formyltetrahydrofolate = N-formyl-L-methionyl-tRNA(fMet) + (6S)-5,6,7,8-tetrahydrofolate + H(+). In terms of biological role, attaches a formyl group to the free amino group of methionyl-tRNA(fMet). The formyl group appears to play a dual role in the initiator identity of N-formylmethionyl-tRNA by promoting its recognition by IF2 and preventing the misappropriation of this tRNA by the elongation apparatus. The chain is Methionyl-tRNA formyltransferase from Borrelia duttonii (strain Ly).